Reading from the N-terminus, the 142-residue chain is MAKVVSRIVKLQIESGSAKPSPPVGPAIGQAGIPIMAFCKAFNAATEGMEKGIPIPTTVTCYKDKSFTFTMSQPPVSFFLKKEVGIKSGSKLPGKESCGSITRENIRKIAQLKMQDMGAIDIEGAMRMVEGSACSMGISVVD.

It belongs to the universal ribosomal protein uL11 family. In terms of assembly, part of the ribosomal stalk of the 50S ribosomal subunit. Interacts with L10 and the large rRNA to form the base of the stalk. L10 forms an elongated spine to which L12 dimers bind in a sequential fashion forming a multimeric L10(L12)X complex. In terms of processing, one or more lysine residues are methylated.

In terms of biological role, forms part of the ribosomal stalk which helps the ribosome interact with GTP-bound translation factors. The sequence is that of Large ribosomal subunit protein uL11 from Liberibacter asiaticus (Citrus greening disease).